The sequence spans 232 residues: Large ribosomal subunit protein uL1 (232 aa).

Belongs to the universal ribosomal protein uL1 family. As to quaternary structure, part of the 50S ribosomal subunit.

Functionally, binds directly to 23S rRNA. The L1 stalk is quite mobile in the ribosome, and is involved in E site tRNA release. In terms of biological role, protein L1 is also a translational repressor protein, it controls the translation of the L11 operon by binding to its mRNA. This is Large ribosomal subunit protein uL1 from Chlamydia trachomatis serovar D (strain ATCC VR-885 / DSM 19411 / UW-3/Cx).